Consider the following 195-residue polypeptide: ATP-dependent Clp protease proteolytic subunit (195 aa).

The active-site Nucleophile is S99. The active site involves H124.

The protein belongs to the peptidase S14 family. In terms of assembly, fourteen ClpP subunits assemble into 2 heptameric rings which stack back to back to give a disk-like structure with a central cavity, resembling the structure of eukaryotic proteasomes.

It localises to the cytoplasm. The catalysed reaction is Hydrolysis of proteins to small peptides in the presence of ATP and magnesium. alpha-casein is the usual test substrate. In the absence of ATP, only oligopeptides shorter than five residues are hydrolyzed (such as succinyl-Leu-Tyr-|-NHMec, and Leu-Tyr-Leu-|-Tyr-Trp, in which cleavage of the -Tyr-|-Leu- and -Tyr-|-Trp bonds also occurs).. Its function is as follows. Cleaves peptides in various proteins in a process that requires ATP hydrolysis. Has a chymotrypsin-like activity. Plays a major role in the degradation of misfolded proteins. The polypeptide is ATP-dependent Clp protease proteolytic subunit (Carboxydothermus hydrogenoformans (strain ATCC BAA-161 / DSM 6008 / Z-2901)).